The following is a 579-amino-acid chain: Nuclear hormone receptor family member nhr-47 (579 aa).

The nuclear receptor DNA-binding region spans 8–83 (GTLCAVCDDI…VGMDKNSIQN (76 aa)). NR C4-type zinc fingers lie at residues 11–31 (CAVCDDIATGKHYSVASCNGC) and 47–71 (CQGNKDCPVNKGVRCACRYCRLQKC). Positions 87–128 (RIGYTKRKRRHDDNDMEGGVHHSEHIRDGSSGSPQMNDESPE) are disordered. The span at 104-114 (GGVHHSEHIRD) shows a compositional bias: basic and acidic residues. The NR LBD domain maps to 164-553 (ADLHSYATLE…SLVKETSLGP (390 aa)).

Belongs to the nuclear hormone receptor family.

It localises to the nucleus. In terms of biological role, orphan nuclear receptor. The chain is Nuclear hormone receptor family member nhr-47 (nhr-47) from Caenorhabditis elegans.